The primary structure comprises 727 residues: Probable copper-importing P-type ATPase A (727 aa).

Residues methionine 1–aspartate 94 lie on the Cytoplasmic side of the membrane. The HMA domain occupies lysine 6–isoleucine 70. Residues cysteine 17 and cysteine 20 each coordinate Cu(+). Residues leucine 95–glycine 115 traverse the membrane as a helical segment. Residues serine 116–proline 119 lie on the Extracellular side of the membrane. The helical transmembrane segment at isoleucine 120–valine 137 threads the bilayer. The Cytoplasmic portion of the chain corresponds to glutamine 138–aspartate 161. The chain crosses the membrane as a helical span at residues valine 162 to phenylalanine 181. Residues proline 182–aspartate 187 are Extracellular-facing. Residues leucine 188–glycine 203 traverse the membrane as a helical segment. Residues lysine 204–serine 341 lie on the Cytoplasmic side of the membrane. The chain crosses the membrane as a helical span at residues glycine 342–leucine 362. The Extracellular portion of the chain corresponds to threonine 363–serine 375. A helical membrane pass occupies residues valine 376–glycine 396. The Cytoplasmic portion of the chain corresponds to threonine 397–asparagine 678. Residue aspartate 425 is the 4-aspartylphosphate intermediate of the active site. Residues aspartate 621 and aspartate 625 each coordinate Mg(2+). Residues leucine 679 to leucine 698 traverse the membrane as a helical segment. Residues asparagine 699–proline 700 lie on the Extracellular side of the membrane. Residues isoleucine 701–leucine 721 traverse the membrane as a helical segment. At asparagine 722–lysine 727 the chain is on the cytoplasmic side.

It belongs to the cation transport ATPase (P-type) (TC 3.A.3) family. Type IB subfamily. In terms of assembly, monomer. Interacts with the copper chaperone CopZ.

It is found in the cell membrane. The catalysed reaction is Cu(+)(in) + ATP + H2O = Cu(+)(out) + ADP + phosphate + H(+). With respect to regulation, inhibited by vanadate. Functionally, probably involved in copper import under copper limiting conditions. The polypeptide is Probable copper-importing P-type ATPase A (copA) (Enterococcus hirae (strain ATCC 9790 / DSM 20160 / JCM 8729 / LMG 6399 / NBRC 3181 / NCIMB 6459 / NCDO 1258 / NCTC 12367 / WDCM 00089 / R)).